A 790-amino-acid chain; its full sequence is DNA ligase 1 (790 aa).

A mitochondrion-targeting transit peptide spans 1-64; it reads MLAIRSSNYL…AFDALMSNAR (64 aa). The interval 64–142 is disordered; that stretch reads RAAAKKKTPQ…TGAKKAKTLS (79 aa). The short motif at 68-75 is the Nuclear localization signal 1 element; sequence KKKTPQTT. The span at 116–128 shows a compositional bias: polar residues; sequence DSANPRSDTSSIA. The tract at residues 337–346 is interaction with target DNA; that stretch reads KLRLGFSGQT. ATP is bound at residue E442. K444 serves as the catalytic N6-AMP-lysine intermediate. The ATP site is built by R449 and R465. Residue E497 participates in Mg(2+) binding. The Nuclear localization signal 2 signature appears at 505 to 512; that stretch reads KKKILPFQ. The tract at residues 518-520 is interaction with target DNA; the sequence is ARK. E596 contributes to the Mg(2+) binding site. The ATP site is built by K601, R614, and K620. Residues 757-790 form a disordered region; sequence DKKPEEATSSEQIADLYQAQKHNHPSNEVKGDDD. The segment covering 781-790 has biased composition (basic and acidic residues); sequence PSNEVKGDDD.

This sequence belongs to the ATP-dependent DNA ligase family. It depends on Mg(2+) as a cofactor. Expressed in all vegetative and reproductive tissues.

It localises to the mitochondrion. It is found in the nucleus. It carries out the reaction ATP + (deoxyribonucleotide)n-3'-hydroxyl + 5'-phospho-(deoxyribonucleotide)m = (deoxyribonucleotide)n+m + AMP + diphosphate.. Essential protein. DNA ligase that seals nicks in double-stranded DNA during DNA replication, DNA recombination and DNA repair. Involved in repair of both single strand breaks (SSBs) and double strand breaks (DSBs). Required in the endosperm for embryogenesis, probably to repair DNA-breaks generated by DME. The sequence is that of DNA ligase 1 (LIG1) from Arabidopsis thaliana (Mouse-ear cress).